A 954-amino-acid polypeptide reads, in one-letter code: Lysine-specific demethylase JMJ14 (954 aa).

The disordered stretch occupies residues 1 to 46; the sequence is MDQLASLAESVAMEEDSEKQSIKGESSLEPDSTPSSPKITARWNPS. Polar residues predominate over residues 29 to 38; sequence EPDSTPSSPK. The JmjN domain maps to 56–97; sequence APIFYPTNEDFDDPLGYIEKLRSKAESYGICRIVPPVAWRPP. Positions 136-143 match the Nuclear localization signal 1 motif; that stretch reads RKRRRISK. The segment at 148–170 is disordered; that stretch reads RRKRDSGCDTASSGSSDSEGKFG. The JmjC domain maps to 263–429; sequence QYSQCGWNLN…HGQNAVEGYS (167 aa). Residues histidine 309, glutamate 311, and histidine 397 each coordinate Fe cation. Positions 470–477 match the Nuclear localization signal 2 motif; the sequence is WKRVCSED. Zn(2+) contacts are provided by cysteine 519, cysteine 522, cysteine 533, cysteine 535, cysteine 542, histidine 545, cysteine 550, and cysteine 552. The segment at 519–571 adopts a C5HC2 zinc-finger fold; it reads CFLCFYDLHMSASSCKCSPNRFACLIHAKDLCSCESKDRYILIRHTLDELWAL. The segment at 641–670 is disordered; the sequence is SNKEVQLKQDGDSDVNRHGHESERNHVHGI. The segment covering 645–670 has biased composition (basic and acidic residues); that stretch reads VQLKQDGDSDVNRHGHESERNHVHGI. An FYR N-terminal domain is found at 726–784; sequence ATNRLSLSVELLSSGSLVVKKLWCSKQAIYPKGFKSRVKFLSVLDPTNLTNYISEVLDA. Residues 786 to 876 enclose the FYR C-terminal domain; sequence LLGPLFRVSV…HQLEEYWNQK (91 aa). Positions 884–905 are disordered; the sequence is EPIKEGEKDDTEKGGASDPSLD. The span at 885-905 shows a compositional bias: basic and acidic residues; sequence PIKEGEKDDTEKGGASDPSLD.

It belongs to the JARID1 histone demethylase family. Interacts with NAC050 and NAC051/NAC052. Interacts with THAL in the nucleus. Fe(2+) is required as a cofactor. In terms of tissue distribution, expressed in shoot apex, primary root tip, trichomes of young leaves, leaf vascular tissues, anther filaments and styles. Detected in inflorescences, leaves, stems, roots and siliques. Mostly expressed in floral organs, and, at low levels, in other organs.

Its subcellular location is the nucleus. It is found in the nucleoplasm. The catalysed reaction is N(6),N(6),N(6)-trimethyl-L-lysyl(4)-[histone H3] + 2-oxoglutarate + O2 = N(6),N(6)-dimethyl-L-lysyl(4)-[histone H3] + formaldehyde + succinate + CO2. It carries out the reaction N(6),N(6)-dimethyl-L-lysyl(4)-[histone H3] + 2-oxoglutarate + O2 = N(6)-methyl-L-lysyl(4)-[histone H3] + formaldehyde + succinate + CO2. It catalyses the reaction N(6)-methyl-L-lysyl(4)-[histone H3] + 2-oxoglutarate + O2 = L-lysyl(4)-[histone H3] + formaldehyde + succinate + CO2. The enzyme catalyses N(6),N(6),N(6)-trimethyl-L-lysyl(4)-[histone H3] + 3 2-oxoglutarate + 3 O2 = L-lysyl(4)-[histone H3] + 3 formaldehyde + 3 succinate + 3 CO2. Transcriptional repressor. Histone demethylase that demethylates 'Lys-4' (H3K4me) of histone H3 with a higher activity for H3K4me3 and H3K4me2 than H3K4me1. No activity on H3K9me3/2, H3K36me3/2 and H3K27me3/2. Function as a nocturne 'eraser' to counteract the diurnal 'writer' methylase activity of ATXR3/SDG2 thus orchestrating the circadian rhythm of histone modifications (e.g. H3K4me3) and modulating the rhythmic expression of diurnal target genes; this mechanism also relies on the circadian clock oscillators CCA1 and LHY. Involved in a negative regulation of root meristem growth upon suboptimal root growth conditions. Represses FT and TSF expression to inhibit the floral transition. Binds around the transcription start site of the FT locus. Involved in the DRM2-mediated maintenance of DNA methylation, but not required for the de novo DNA methylation. Required for demethylating histone H3K4me3 at the target of RNA silencing. Counteracts the DNA methylation of expressed transgenes; specific attenuation of transgene DNA methylation enhances the production of aberrant RNAs (e.g. uncapped and antisense) that readily induce systemic RDR6-dependent post-transcriptional transgene silencing (PTGS) spreading. Together with NAC051/NAC052 and NAC050, regulates gene expression and flowering time, probably by the promotion of RNA-mediated gene silencing. Together with JMJ16 and JMJ17, required for plant growth and development. Promotes local and systemic immunity (especially toward the bacterial pathogen Pseudomonas syringae Pst DC3000 avrRpt2) by regulating positively pathogen-induced H3K4me3 enrichment and expression of defense genes involved in salicylic acid (SA)- and pipecolic acid (Pip)-mediated defense pathways (e.g. PR1, FMO1, ALD1 and SARD4). The chain is Lysine-specific demethylase JMJ14 from Arabidopsis thaliana (Mouse-ear cress).